The primary structure comprises 170 residues: Protein ripply3 (170 aa).

The short motif at 40–43 is the WRPW motif element; the sequence is WRPW. Positions 51–61 are enriched in basic and acidic residues; the sequence is ELDGQQRRSGE. Residues 51-78 are disordered; it reads ELDGQQRRSGEADGVPTNTGPKGALGFQ. Positions 79–114 are ripply homology domain; the sequence is HPVRLYMPKSKTSEYLQHMGRKVLASFPVQATIHFY. Positions 142-155 are enriched in polar residues; that stretch reads GVDSSRGSSDNYSV. A disordered region spans residues 142-170; sequence GVDSSRGSSDNYSVQGGPKRNIGSHAGSA.

The protein belongs to the ripply family. As to quaternary structure, interacts with tbx1 and tle4/grg4. At neurula stage, expressed in the region close to the heart mesoderm. At the tailbud stage, expressed in the pharyngeal region.

The protein resides in the nucleus. In terms of biological role, acts as a transcriptional corepressor. Negative regulator of the transcriptional activity of tbx1 that plays a key role in pharyngeal development. Plays a role in the formation of the anteroposterior (AP) axis during embryonic development; required to establish the posterolateral border of the pre-placodal ectoderm (PPE) acting downstream of the retinoic acid receptor (RAR) signaling. This Xenopus laevis (African clawed frog) protein is Protein ripply3 (ripply3).